The chain runs to 249 residues: Imidazole glycerol phosphate synthase subunit HisF (249 aa).

Residues aspartate 11 and aspartate 130 contribute to the active site.

This sequence belongs to the HisA/HisF family. In terms of assembly, heterodimer of HisH and HisF.

The protein localises to the cytoplasm. It catalyses the reaction 5-[(5-phospho-1-deoxy-D-ribulos-1-ylimino)methylamino]-1-(5-phospho-beta-D-ribosyl)imidazole-4-carboxamide + L-glutamine = D-erythro-1-(imidazol-4-yl)glycerol 3-phosphate + 5-amino-1-(5-phospho-beta-D-ribosyl)imidazole-4-carboxamide + L-glutamate + H(+). It functions in the pathway amino-acid biosynthesis; L-histidine biosynthesis; L-histidine from 5-phospho-alpha-D-ribose 1-diphosphate: step 5/9. In terms of biological role, IGPS catalyzes the conversion of PRFAR and glutamine to IGP, AICAR and glutamate. The HisF subunit catalyzes the cyclization activity that produces IGP and AICAR from PRFAR using the ammonia provided by the HisH subunit. The polypeptide is Imidazole glycerol phosphate synthase subunit HisF (Exiguobacterium sibiricum (strain DSM 17290 / CCUG 55495 / CIP 109462 / JCM 13490 / 255-15)).